We begin with the raw amino-acid sequence, 185 residues long: Orotate phosphoribosyltransferase (185 aa).

5-phospho-alpha-D-ribose 1-diphosphate-binding positions include Arg-98, Lys-99, Lys-102, His-104, and 128-136; that span reads EDVTTTGGS. Orotate is bound by residues Thr-132 and Arg-160.

Belongs to the purine/pyrimidine phosphoribosyltransferase family. PyrE subfamily. Homodimer. Mg(2+) serves as cofactor.

The enzyme catalyses orotidine 5'-phosphate + diphosphate = orotate + 5-phospho-alpha-D-ribose 1-diphosphate. The protein operates within pyrimidine metabolism; UMP biosynthesis via de novo pathway; UMP from orotate: step 1/2. Catalyzes the transfer of a ribosyl phosphate group from 5-phosphoribose 1-diphosphate to orotate, leading to the formation of orotidine monophosphate (OMP). The polypeptide is Orotate phosphoribosyltransferase (Bradyrhizobium sp. (strain ORS 278)).